The sequence spans 196 residues: MMWEQFKKEKLRGYLEAKNQRKVDFDIVELLDLINSFDDFVTLSSCSGRIAVVDLEKPGDKASSLFLGKWHEGVEVSEVAEAALRSRKVAWLIQYPPIIHVACRNIGAAKLLMNAANTAGFRRSGVISLSNYVVEIASLERIELPVAEKGLMLVDDAYLSYVVRWANEKLLKGKEKLGRLQEALESLQRENAYCSD.

This sequence belongs to the TYW3 family.

The enzyme catalyses 4-demethyl-7-[(3S)-3-amino-3-carboxypropyl]wyosine(37) in tRNA(Phe) + S-adenosyl-L-methionine = 7-[(3S)-3-amino-3-carboxypropyl]wyosine(37) in tRNA(Phe) + S-adenosyl-L-homocysteine + H(+). Functionally, S-adenosyl-L-methionine-dependent methyltransferase that acts as a component of the wyosine derivatives biosynthesis pathway. Probably methylates N-4 position of wybutosine-86 to produce wybutosine-72. The protein is tRNA(Phe) 7-((3-amino-3-carboxypropyl)-4-demethylwyosine(37)-N(4))-methyltransferase of Archaeoglobus fulgidus (strain ATCC 49558 / DSM 4304 / JCM 9628 / NBRC 100126 / VC-16).